Here is a 412-residue protein sequence, read N- to C-terminus: Gamma-glutamyl phosphate reductase (412 aa).

This sequence belongs to the gamma-glutamyl phosphate reductase family.

It is found in the cytoplasm. The catalysed reaction is L-glutamate 5-semialdehyde + phosphate + NADP(+) = L-glutamyl 5-phosphate + NADPH + H(+). It functions in the pathway amino-acid biosynthesis; L-proline biosynthesis; L-glutamate 5-semialdehyde from L-glutamate: step 2/2. In terms of biological role, catalyzes the NADPH-dependent reduction of L-glutamate 5-phosphate into L-glutamate 5-semialdehyde and phosphate. The product spontaneously undergoes cyclization to form 1-pyrroline-5-carboxylate. In Actinobacillus pleuropneumoniae serotype 3 (strain JL03), this protein is Gamma-glutamyl phosphate reductase.